We begin with the raw amino-acid sequence, 323 residues long: Small ribosomal subunit protein uS3 (323 aa).

Residues 17–86 (IDEFFADELG…DPQIDVQEVD (70 aa)) enclose the KH type-2 domain. A disordered region spans residues 251 to 303 (ADPGVSSEDEEVVTEPVDIGGDDEDVEDIEVVSDDSGNDTETVAEEVEELDAE). Residues 270–303 (GGDDEDVEDIEVVSDDSGNDTETVAEEVEELDAE) show a composition bias toward acidic residues.

The protein belongs to the universal ribosomal protein uS3 family. As to quaternary structure, part of the 30S ribosomal subunit.

In terms of biological role, binds the lower part of the 30S subunit head. The sequence is that of Small ribosomal subunit protein uS3 from Haloquadratum walsbyi (strain DSM 16790 / HBSQ001).